The following is an 828-amino-acid chain: Periplasmic nitrate reductase (828 aa).

The tat-type signal signal peptide spans 1–31; that stretch reads MKLSRRSFMKANAVAAAAAAAGLSVPGVARA. Residues 39–95 enclose the 4Fe-4S Mo/W bis-MGD-type domain; sequence IKWDKAPCRFCGTGCGVLVGTQQGRVVACQGDPDAPVNRGLNCIKGYFLPKIMYGKD. Residues cysteine 46, cysteine 49, cysteine 53, and cysteine 81 each contribute to the [4Fe-4S] cluster site. Mo-bis(molybdopterin guanine dinucleotide)-binding positions include lysine 83, glutamine 150, asparagine 175, cysteine 179, 212 to 219, 243 to 247, 262 to 264, methionine 372, glutamine 376, asparagine 482, 508 to 509, lysine 531, aspartate 558, and 718 to 727; these read WGSNMAEM, STFQH, QSD, SD, and TGRVLEHWHT. Phenylalanine 794 contacts substrate. Residues asparagine 802 and lysine 819 each coordinate Mo-bis(molybdopterin guanine dinucleotide).

It belongs to the prokaryotic molybdopterin-containing oxidoreductase family. NasA/NapA/NarB subfamily. Component of the periplasmic nitrate reductase NapAB complex composed of NapA and NapB. The cofactor is [4Fe-4S] cluster. Mo-bis(molybdopterin guanine dinucleotide) serves as cofactor. Predicted to be exported by the Tat system. The position of the signal peptide cleavage has not been experimentally proven.

The protein resides in the periplasm. It catalyses the reaction 2 Fe(II)-[cytochrome] + nitrate + 2 H(+) = 2 Fe(III)-[cytochrome] + nitrite + H2O. In terms of biological role, catalytic subunit of the periplasmic nitrate reductase complex NapAB. Receives electrons from NapB and catalyzes the reduction of nitrate to nitrite. The chain is Periplasmic nitrate reductase from Salmonella agona (strain SL483).